Consider the following 337-residue polypeptide: Heat-inducible transcription repressor HrcA (337 aa).

Belongs to the HrcA family.

In terms of biological role, negative regulator of class I heat shock genes (grpE-dnaK-dnaJ and groELS operons). Prevents heat-shock induction of these operons. The polypeptide is Heat-inducible transcription repressor HrcA (Polaromonas naphthalenivorans (strain CJ2)).